We begin with the raw amino-acid sequence, 400 residues long: Serine/threonine transporter SstT (400 aa).

9 helical membrane passes run 9–29 (LVTQIAIAVVIGIVLAAVWPA), 36–56 (ILGSLFISALKAVAPVLVFVL), 75–95 (VLVLYAVGTLAAATVGVVASM), 134–154 (ALLEANYIGILAWAIALGLAL), 175–195 (VIQLVIRLAPLGILGLVASTF), 209–229 (LLAVLLGCMLFVALVVNPLIV), 281–301 (IAIPLGATINMAGAAITISVL), 323–343 (VVASLCACGASGVAGGSLLLI), and 349–369 (LFGIGNDVAMQVVAIGFIIGI).

The protein belongs to the dicarboxylate/amino acid:cation symporter (DAACS) (TC 2.A.23) family.

Its subcellular location is the cell inner membrane. The enzyme catalyses L-serine(in) + Na(+)(in) = L-serine(out) + Na(+)(out). It carries out the reaction L-threonine(in) + Na(+)(in) = L-threonine(out) + Na(+)(out). Functionally, involved in the import of serine and threonine into the cell, with the concomitant import of sodium (symport system). The sequence is that of Serine/threonine transporter SstT from Acidovorax sp. (strain JS42).